Consider the following 341-residue polypeptide: Mitochondrial glutathione transporter SLC25A40 (341 aa).

Solcar repeat units lie at residues 14–132 (ITPS…LRDI), 140–224 (RAEI…VKQS), and 234–328 (PTFA…GKSF). Helical transmembrane passes span 20–40 (MIASSMGALLTSFFVTPLDVV), 104–124 (LWSGLPPTLVMAVPATVIYFT), 143–163 (IASLVAGATARLWSATLISPL), 200–221 (WGPTVLRDVPFSALYWHNYELV), 236–256 (FAISFTAGAVSGSIAAIVTLP), and 299–319 (GLFAGLIPRLIKVAPACAIMI).

Belongs to the mitochondrial carrier (TC 2.A.29) family.

It is found in the mitochondrion inner membrane. The enzyme catalyses glutathione(in) = glutathione(out). Functionally, probable mitochondrial transporter required for glutathione import into mitochondria. Glutathione, which plays key roles in oxidative metabolism, is produced exclusively in the cytosol and is imported in many organelles. Mitochondrial glutathione is required for the activity and stability of proteins containing iron-sulfur clusters. In Xenopus tropicalis (Western clawed frog), this protein is Mitochondrial glutathione transporter SLC25A40.